Reading from the N-terminus, the 117-residue chain is Probable non-functional immunoglobulin heavy variable 7-81 (117 aa).

The first 19 residues, 1 to 19, serve as a signal peptide directing secretion; the sequence is MDWTWSILFLVAAATGTYS. A framework-1 region spans residues 20-44; sequence QVQLVQSGHEVKQPGASVKVSCKAS. An Ig-like domain is found at 20-117; that stretch reads QVQLVQSGHE…EDMAMYYCAR (98 aa). An intrachain disulfide couples cysteine 41 to cysteine 115. The interval 45-52 is complementarity-determining-1; it reads GYSFTTYG. A framework-2 region spans residues 53–69; that stretch reads MNWVPQAPGQGLEWMGW. Positions 70–77 are complementarity-determining-2; sequence FNTYTGNP. Asparagine 76 carries N-linked (GlcNAc...) asparagine glycosylation. The tract at residues 78 to 115 is framework-3; the sequence is TYAQGFTGRFVFSMDTSASTAYLQISSLKAEDMAMYYC. The segment at 116–117 is complementarity-determining-3; sequence AR.

As to quaternary structure, immunoglobulins are composed of two identical heavy chains and two identical light chains; disulfide-linked.

It is found in the secreted. It localises to the cell membrane. Functionally, probable non-functional open reading frame (ORF) of V region of the variable domain of immunoglobulin heavy chains. Non-functional ORF generally cannot participate in the synthesis of a productive immunoglobulin chain due to altered V-(D)-J or switch recombination and/or splicing site (at mRNA level) and/or conserved amino acid change (protein level). Immunoglobulins, also known as antibodies, are membrane-bound or secreted glycoproteins produced by B lymphocytes. In the recognition phase of humoral immunity, the membrane-bound immunoglobulins serve as receptors which, upon binding of a specific antigen, trigger the clonal expansion and differentiation of B lymphocytes into immunoglobulins-secreting plasma cells. Secreted immunoglobulins mediate the effector phase of humoral immunity, which results in the elimination of bound antigens. The antigen binding site is formed by the variable domain of one heavy chain, together with that of its associated light chain. Thus, each immunoglobulin has two antigen binding sites with remarkable affinity for a particular antigen. The variable domains are assembled by a process called V-(D)-J rearrangement and can then be subjected to somatic hypermutations which, after exposure to antigen and selection, allow affinity maturation for a particular antigen. The sequence is that of Probable non-functional immunoglobulin heavy variable 7-81 from Homo sapiens (Human).